The primary structure comprises 1029 residues: Kinesin-like protein KIF17 (1029 aa).

In terms of domain architecture, Kinesin motor spans 5–335 (AVKVVVRCRP…LRYANRAKNI (331 aa)). 91-98 (GQTGSGKS) contacts ATP. Residues 346-462 (KDALLREYQE…EENLRKETEA (117 aa)) adopt a coiled-coil conformation. 2 disordered regions span residues 523–569 (ELPK…MPTE) and 647–673 (VPAP…PPRP). Positions 532–551 (SEISLGSSESSSLEETSVSE) are enriched in low complexity. Over residues 657–673 (SDARPEAEAADDFPPRP) the composition is skewed to basic and acidic residues. Positions 739–846 (QQVLARLQLL…QLEKIDYLAT (108 aa)) form a coiled coil. Disordered regions lie at residues 908-931 (AVST…EPNM) and 968-1029 (KSLT…SEPL).

This sequence belongs to the TRAFAC class myosin-kinesin ATPase superfamily. Kinesin family. Homodimer. Interacts with APBA1 (via PDZ domain); the interaction is direct and is required for association of KIF17 with the cargo that is to be transported. Interacts with IFT B complex components IFT52 and IFT57. Interacts with IFT70B. Interacts with PIWIL1. Interacts with TBATA.

It is found in the cytoplasm. It localises to the cytoskeleton. The protein localises to the cell projection. Its subcellular location is the cilium. The protein resides in the dendrite. In terms of biological role, dendrite-specific motor protein which, in association with the Apba1-containing complex (LIN-10-LIN-2-LIN-7 complex), transports vesicles containing N-methyl-D-aspartate (NMDA) receptor subunit NR2B along microtubules. The protein is Kinesin-like protein KIF17 (KIF17) of Homo sapiens (Human).